Consider the following 204-residue polypeptide: Large ribosomal subunit protein uL4 (204 aa).

The segment at 49-75 (TKGRSDVSGGGKKPWRQKGRGGARAGS) is disordered.

The protein belongs to the universal ribosomal protein uL4 family. Part of the 50S ribosomal subunit.

One of the primary rRNA binding proteins, this protein initially binds near the 5'-end of the 23S rRNA. It is important during the early stages of 50S assembly. It makes multiple contacts with different domains of the 23S rRNA in the assembled 50S subunit and ribosome. Functionally, forms part of the polypeptide exit tunnel. The protein is Large ribosomal subunit protein uL4 of Campylobacter jejuni subsp. doylei (strain ATCC BAA-1458 / RM4099 / 269.97).